The primary structure comprises 144 residues: 3-hydroxyacyl-[acyl-carrier-protein] dehydratase FabZ (144 aa).

His51 is a catalytic residue.

The protein belongs to the thioester dehydratase family. FabZ subfamily.

Its subcellular location is the cytoplasm. The enzyme catalyses a (3R)-hydroxyacyl-[ACP] = a (2E)-enoyl-[ACP] + H2O. Functionally, involved in unsaturated fatty acids biosynthesis. Catalyzes the dehydration of short chain beta-hydroxyacyl-ACPs and long chain saturated and unsaturated beta-hydroxyacyl-ACPs. The polypeptide is 3-hydroxyacyl-[acyl-carrier-protein] dehydratase FabZ (Lactococcus lactis subsp. cremoris (strain SK11)).